We begin with the raw amino-acid sequence, 306 residues long: Glutamyl-Q tRNA(Asp) synthetase (306 aa).

L-glutamate is bound by residues 4 to 8 (RYAPS) and glutamate 40. The 'HIGH' region signature appears at 7–17 (PSPSGDLHFGN). The Zn(2+) site is built by cysteine 92, cysteine 94, tyrosine 113, and cysteine 117. 2 residues coordinate L-glutamate: tyrosine 180 and arginine 198. Residues 236 to 240 (RLAKR) carry the 'KMSKS' region motif. Lysine 239 contributes to the ATP binding site.

Belongs to the class-I aminoacyl-tRNA synthetase family. GluQ subfamily. It depends on Zn(2+) as a cofactor.

In terms of biological role, catalyzes the tRNA-independent activation of glutamate in presence of ATP and the subsequent transfer of glutamate onto a tRNA(Asp). Glutamate is transferred on the 2-amino-5-(4,5-dihydroxy-2-cyclopenten-1-yl) moiety of the queuosine in the wobble position of the QUC anticodon. In Corynebacterium efficiens (strain DSM 44549 / YS-314 / AJ 12310 / JCM 11189 / NBRC 100395), this protein is Glutamyl-Q tRNA(Asp) synthetase.